A 185-amino-acid chain; its full sequence is Dual specificity protein phosphatase 3 (185 aa).

In terms of domain architecture, Tyrosine-protein phosphatase spans 28–179 (QPCNEVTPRI…LCQLNDRLAK (152 aa)). The Phosphocysteine intermediate role is filled by cysteine 124.

This sequence belongs to the protein-tyrosine phosphatase family. Non-receptor class dual specificity subfamily. As to quaternary structure, microtubule inner protein component of sperm flagellar doublet microtubules. Interacts with VRK3; this interaction activates DUSP3 phosphatase activity.

It is found in the nucleus. The protein localises to the cytoplasm. Its subcellular location is the cytoskeleton. It localises to the flagellum axoneme. The catalysed reaction is O-phospho-L-tyrosyl-[protein] + H2O = L-tyrosyl-[protein] + phosphate. It catalyses the reaction O-phospho-L-seryl-[protein] + H2O = L-seryl-[protein] + phosphate. The enzyme catalyses O-phospho-L-threonyl-[protein] + H2O = L-threonyl-[protein] + phosphate. In terms of biological role, shows activity both for tyrosine-protein phosphate and serine-protein phosphate, but displays a strong preference toward phosphotyrosines. Specifically dephosphorylates and inactivates ERK1 and ERK2. This is Dual specificity protein phosphatase 3 (DUSP3) from Homo sapiens (Human).